The primary structure comprises 760 residues: Catalase-peroxidase (760 aa).

The segment at M1 to T22 is disordered. A cross-link (tryptophyl-tyrosyl-methioninium (Trp-Tyr) (with M-268)) is located at residues W93–Y242. The active-site Proton acceptor is H94. The interval K206–S226 is disordered. The span at G213–S226 shows a compositional bias: basic and acidic residues. A cross-link (tryptophyl-tyrosyl-methioninium (Tyr-Met) (with W-93)) is located at residues Y242–M268. Residue H283 participates in heme b binding.

Belongs to the peroxidase family. Peroxidase/catalase subfamily. As to quaternary structure, homodimer or homotetramer. It depends on heme b as a cofactor. In terms of processing, formation of the three residue Trp-Tyr-Met cross-link is important for the catalase, but not the peroxidase activity of the enzyme.

Its subcellular location is the cytoplasm. The enzyme catalyses H2O2 + AH2 = A + 2 H2O. It carries out the reaction 2 H2O2 = O2 + 2 H2O. Bifunctional enzyme with both catalase and broad-spectrum peroxidase activity. The sequence is that of Catalase-peroxidase from Pyrenophora tritici-repentis (strain Pt-1C-BFP) (Wheat tan spot fungus).